A 114-amino-acid polypeptide reads, in one-letter code: Cytochrome c oxidase subunit 4B (114 aa).

A run of 3 helical transmembrane segments spans residues 29–49 (QIVV…AVAT), 56–76 (FAIP…LFFF), and 89–109 (AFMI…MLLL).

The protein belongs to the cytochrome c oxidase bacterial subunit 4 family.

Its subcellular location is the cell membrane. It catalyses the reaction 4 Fe(II)-[cytochrome c] + O2 + 8 H(+)(in) = 4 Fe(III)-[cytochrome c] + 2 H2O + 4 H(+)(out). The polypeptide is Cytochrome c oxidase subunit 4B (ctaF) (Alkalihalophilus pseudofirmus (strain ATCC BAA-2126 / JCM 17055 / OF4) (Bacillus pseudofirmus)).